A 95-amino-acid chain; its full sequence is uncharacterized protein (95 aa).

Functionally, the presence of the two linear plasmids, termed pGKL1 and pGKL2, in strains of Kluyveromyces lactis confers the killer phenotype to the host cell, by promoting the secretion of a toxin able to inhibit the growth of sensitive strains. This is an uncharacterized protein from Kluyveromyces lactis (strain ATCC 8585 / CBS 2359 / DSM 70799 / NBRC 1267 / NRRL Y-1140 / WM37) (Yeast).